The primary structure comprises 986 residues: LRR receptor-like serine/threonine-protein kinase ER2 (986 aa).

The N-terminal stretch at 1–21 (MTTTTTTRLLLAAILLAVAAA) is a signal peptide. Residues 22–581 (DDDGQTLLEI…VQRSSVSRSA (560 aa)) are Extracellular-facing. Asparagine 64 and asparagine 73 each carry an N-linked (GlcNAc...) asparagine glycan. 20 LRR repeats span residues 68-89 (AVAA…AIGN), 90-114 (LKSV…IGDC), 116-138 (SLKT…ISKL), 139-161 (KHLE…TLSQ), 162-186 (LPNL…IYWN), 188-210 (VLQY…MCQL), 211-233 (TGLW…TIGN), 234-259 (CTSF…GFLQ), 261-280 (ATLS…VIGL), 281-304 (MQAL…ILGN), 306-329 (TYTE…LGNM), 330-352 (STLH…ELGK), 354-377 (TGLF…ISSC), 379-401 (NLIS…LHKL), 402-425 (ESIT…LAKM), 427-449 (NLDT…IGSL), 450-472 (EHLL…EFGN), 473-498 (LRSI…GMLQ), 500-520 (LILL…LINC), and 521-545 (FSLN…NFSR). 2 N-linked (GlcNAc...) asparagine glycosylation sites follow: asparagine 220 and asparagine 233. Residues asparagine 269, asparagine 304, and asparagine 328 are each glycosylated (N-linked (GlcNAc...) asparagine). Residues asparagine 373, asparagine 391, and asparagine 408 are each glycosylated (N-linked (GlcNAc...) asparagine). A glycan (N-linked (GlcNAc...) asparagine) is linked at asparagine 456. 3 N-linked (GlcNAc...) asparagine glycosylation sites follow: asparagine 509, asparagine 527, and asparagine 542. Residues 582–602 (ILGIAVAGLVILLMILAAACW) form a helical membrane-spanning segment. Residues 603–986 (PHWAQVPKDV…FGEVISQNTE (384 aa)) are Cytoplasmic-facing. One can recognise a Protein kinase domain in the interval 653-934 (LSEKYIIGYG…YPDPPSKPAL (282 aa)). Residues 659-667 (IGYGASSTV) and lysine 681 each bind ATP. The Proton acceptor role is filled by aspartate 779.

It belongs to the protein kinase superfamily. Ser/Thr protein kinase family.

It localises to the cell membrane. It carries out the reaction L-seryl-[protein] + ATP = O-phospho-L-seryl-[protein] + ADP + H(+). The catalysed reaction is L-threonyl-[protein] + ATP = O-phospho-L-threonyl-[protein] + ADP + H(+). In terms of biological role, receptor kinase that may be involved in the regulation of cell proliferation and cell growth. This is LRR receptor-like serine/threonine-protein kinase ER2 from Oryza sativa subsp. japonica (Rice).